Here is a 310-residue protein sequence, read N- to C-terminus: Porphobilinogen deaminase (310 aa).

Cys242 carries the post-translational modification S-(dipyrrolylmethanemethyl)cysteine.

Belongs to the HMBS family. As to quaternary structure, monomer. It depends on dipyrromethane as a cofactor.

It carries out the reaction 4 porphobilinogen + H2O = hydroxymethylbilane + 4 NH4(+). The protein operates within porphyrin-containing compound metabolism; protoporphyrin-IX biosynthesis; coproporphyrinogen-III from 5-aminolevulinate: step 2/4. Its function is as follows. Tetrapolymerization of the monopyrrole PBG into the hydroxymethylbilane pre-uroporphyrinogen in several discrete steps. The polypeptide is Porphobilinogen deaminase (Shewanella baltica (strain OS223)).